The sequence spans 364 residues: Methylthioribose-1-phosphate isomerase (364 aa).

Residues 51 to 53 (RGA), arginine 88, and glutamine 199 contribute to the substrate site. The active-site Proton donor is aspartate 240. 250–251 (NK) lines the substrate pocket.

The protein belongs to the eIF-2B alpha/beta/delta subunits family. MtnA subfamily.

It carries out the reaction 5-(methylsulfanyl)-alpha-D-ribose 1-phosphate = 5-(methylsulfanyl)-D-ribulose 1-phosphate. The protein operates within amino-acid biosynthesis; L-methionine biosynthesis via salvage pathway; L-methionine from S-methyl-5-thio-alpha-D-ribose 1-phosphate: step 1/6. Its function is as follows. Catalyzes the interconversion of methylthioribose-1-phosphate (MTR-1-P) into methylthioribulose-1-phosphate (MTRu-1-P). The polypeptide is Methylthioribose-1-phosphate isomerase (Cereibacter sphaeroides (strain KD131 / KCTC 12085) (Rhodobacter sphaeroides)).